The primary structure comprises 129 residues: Small ribosomal subunit protein uS11 (129 aa).

It belongs to the universal ribosomal protein uS11 family. As to quaternary structure, part of the 30S ribosomal subunit. Interacts with proteins S7 and S18. Binds to IF-3.

Located on the platform of the 30S subunit, it bridges several disparate RNA helices of the 16S rRNA. Forms part of the Shine-Dalgarno cleft in the 70S ribosome. The chain is Small ribosomal subunit protein uS11 from Francisella tularensis subsp. tularensis (strain FSC 198).